Here is a 662-residue protein sequence, read N- to C-terminus: Translation factor guf1, mitochondrial (662 aa).

The transit peptide at 1–42 (MRGCLQLARWLSAAPNWPASSLLKAPGSSFATRLFTTTSSYK) directs the protein to the mitochondrion. The 181-residue stretch at 64–244 (ERYRNFCIVA…TVVEKIPAPI (181 aa)) folds into the tr-type G domain. GTP-binding positions include 73–80 (AHVDHGKS), 137–141 (DTPGH), and 191–194 (NKVD).

Belongs to the TRAFAC class translation factor GTPase superfamily. Classic translation factor GTPase family. LepA subfamily.

The protein localises to the mitochondrion inner membrane. It catalyses the reaction GTP + H2O = GDP + phosphate + H(+). Its function is as follows. Promotes mitochondrial protein synthesis. May act as a fidelity factor of the translation reaction, by catalyzing a one-codon backward translocation of tRNAs on improperly translocated ribosomes. Binds to mitochondrial ribosomes in a GTP-dependent manner. The sequence is that of Translation factor guf1, mitochondrial (guf1) from Emericella nidulans (strain FGSC A4 / ATCC 38163 / CBS 112.46 / NRRL 194 / M139) (Aspergillus nidulans).